Consider the following 65-residue polypeptide: Hainantoxin-X.3 (65 aa).

The signal sequence occupies residues 1–20 (MNMKILVLVAVLCLVVSTHA). The propeptide occupies 21–37 (ERHSKTDMGDSPMIQER). 3 disulfides stabilise this stretch: cysteine 39-cysteine 56, cysteine 46-cysteine 59, and cysteine 55-cysteine 64.

The protein belongs to the neurotoxin 36 family. 02 subfamily. As to expression, expressed by the venom gland.

The protein localises to the secreted. Its function is as follows. Reversibly blocks N-type calcium channels (Cav2.2/CACNA1B) in rat dorsal root ganglion cells. Elicits no toxic symptoms in either vertebrates or invertebrates during a period of 48 hours post-injection, when it was assayed in vivo by direct injection into mice and cockroaches. This chain is Hainantoxin-X.3, found in Cyriopagopus hainanus (Chinese bird spider).